A 241-amino-acid chain; its full sequence is MATNAKPVYKRILLKLSGEALQGTEGFGIDASILDRMAQEIKELVELGIQVGVVIGGGNLFRGAGLAKAGMNRVVGDHMGMLATVMNGLAMRDALHRAYVNARLMSAIPLNGVCDSYSWAEAISLLRNNRVVLLSAGTGNPFFTTDSAACLRGIEIEADVVLKATKVDGVFTADPAKDPTATMYEQLTYSEVLEKELKVMDLAAFTLARDHKLPIRVFNMNKPGALRRVVMGEKEGTLITE.

15-18 contacts ATP; sequence KLSG. The segment at 23-28 is involved in allosteric activation by GTP; it reads GTEGFG. Residue Gly-57 participates in UMP binding. Residues Gly-58 and Arg-62 each coordinate ATP. UMP is bound by residues Asp-77 and 138 to 145; that span reads TGNPFFTT. The ATP site is built by Thr-165, Phe-171, and Asp-174.

The protein belongs to the UMP kinase family. In terms of assembly, homohexamer.

It is found in the cytoplasm. The catalysed reaction is UMP + ATP = UDP + ADP. The protein operates within pyrimidine metabolism; CTP biosynthesis via de novo pathway; UDP from UMP (UMPK route): step 1/1. With respect to regulation, allosterically activated by GTP. Inhibited by UTP. Catalyzes the reversible phosphorylation of UMP to UDP. In Shigella dysenteriae serotype 1 (strain Sd197), this protein is Uridylate kinase.